The chain runs to 470 residues: Pheromone a factor receptor (470 aa).

Over 1 to 5 (MSYKS) the chain is Extracellular. Residues 6–23 (AIIGLCLLAVILLAPPLA) form a helical membrane-spanning segment. The Cytoplasmic segment spans residues 24–29 (WHSHTK). A helical transmembrane segment spans residues 30–53 (NIPAIILITWLLTMNLTCIVDAAI). Over 54–70 (WSDDDFLTRWDGKGWCD) the chain is Extracellular. A helical transmembrane segment spans residues 71–98 (IVIKLQVGANIGISCAVTNIIYNLHTIL). The Cytoplasmic portion of the chain corresponds to 99–116 (KADSVLPDLSSWTKIVKD). A helical membrane pass occupies residues 117-134 (LVISLFTPVMVMGFSYLL). Residues 135–155 (QVFRYGIARYNGCQNLLSPTW) are Extracellular-facing. The helical transmembrane segment at 156–183 (ITTVLYTMWMLIWSFVGAVYATLVLFVF) threads the bilayer. At 184-205 (YKKRKDVRDILHCTNSGLNLTR) the chain is on the cytoplasmic side. Residues 206–228 (FARLLIFCFIIILVMFPFSVYTF) form a helical membrane-spanning segment. Topologically, residues 229–266 (VQDLQQVEGHYTFKNTHSSTIWNTIIKFDPGRPIYNIW) are extracellular. The chain crosses the membrane as a helical span at residues 267–285 (LYVLMSYLVFLIFGLGSDA). At 286–470 (LHMYSKFLRS…EHSSENTAGP (185 aa)) the chain is on the cytoplasmic side. Residues 300–470 (FVLDMWKRFI…EHSSENTAGP (171 aa)) are hydrophilic. Residues 440–470 (NFEGESLCYSPASKEENSSSNEHSSENTAGP) are disordered.

It belongs to the G-protein coupled receptor 4 family.

It localises to the membrane. Its function is as follows. Receptor for the peptide pheromone a factor. This is Pheromone a factor receptor (STE3) from Saccharomyces cerevisiae (strain ATCC 204508 / S288c) (Baker's yeast).